The chain runs to 505 residues: Lysine--tRNA ligase (505 aa).

Mg(2+) contacts are provided by Glu403 and Glu410.

The protein belongs to the class-II aminoacyl-tRNA synthetase family. As to quaternary structure, homodimer. The cofactor is Mg(2+).

Its subcellular location is the cytoplasm. The enzyme catalyses tRNA(Lys) + L-lysine + ATP = L-lysyl-tRNA(Lys) + AMP + diphosphate. The chain is Lysine--tRNA ligase from Methanospirillum hungatei JF-1 (strain ATCC 27890 / DSM 864 / NBRC 100397 / JF-1).